Reading from the N-terminus, the 278-residue chain is Prohibitin-7, mitochondrial (278 aa).

The Mitochondrial matrix portion of the chain corresponds to 1–14 (MNVKKVPNVPGSPA). The helical; Signal-anchor for type II membrane protein transmembrane segment at 15 to 37 (LSALLKLGVIGGLGLYCIGSSMY) threads the bilayer. At 38–278 (NVDGGHRAIV…NSSDLLISKQ (241 aa)) the chain is on the mitochondrial intermembrane side. Residues 186 to 220 (KEFTEAIEKKQVAAQEAERAKFIVEKAEQDKKSAI) adopt a coiled-coil conformation.

This sequence belongs to the prohibitin family. As to quaternary structure, component of a prohibitin multimeric complex in mitochondrial membranes.

Its subcellular location is the mitochondrion inner membrane. Prohibitin probably acts as a holdase/unfoldase for the stabilization of newly synthesized mitochondrial proteins. The protein is Prohibitin-7, mitochondrial (PHB7) of Arabidopsis thaliana (Mouse-ear cress).